The following is a 1809-amino-acid chain: Pyochelin synthetase PchF (1809 aa).

The tract at residues 69–490 is condensation/cyclization; it reads FPLTPVQAAY…GLLRRLAQSP (422 aa). The interval 520–915 is adenylation; it reads FAERALLTPD…GREDDQVKIR (396 aa). The 82-residue stretch at 1407-1488 folds into the Carrier domain; sequence APADELENAL…GLAERLRSAP (82 aa). O-(pantetheine 4'-phosphoryl)serine is present on S1442. The tract at residues 1584-1797 is thioesterase; sequence LGRRYAEALH…FDCLGEALAQ (214 aa).

The protein belongs to the NRP synthetase family. The cofactor is pantetheine 4'-phosphate.

It catalyses the reaction holo-[peptidyl-carrier protein] + L-cysteine + ATP = L-cysteinyl-[peptidyl-carrier protein] + AMP + diphosphate. It participates in siderophore biosynthesis. Its function is as follows. Involved in the biosynthesis of the siderophore pyochelin. Adenylates L-cysteine and loads it onto its peptidyl carrier domain via a thioester linkage to the phosphopanthetheine moiety. Then forms a peptide bond between the salicyl-thiazolinyl intermediate bound to the second carrier domain of PchE and the cysteine bound to its own peptidyl carrier domain to form the salicyl-thiazolinyl-cysteinyl-S-PCP2 intermediate. It subsequently cyclizes the C-terminal cysteine to form the second thiazoline heterocycle in the salicyl-thiazolinyl-thiazolinyl-S-PCP2 intermediate. When this intermediate is released by the action of a thioesterase, it produces the tricyclic acid hydroxyphenyl-thiazolyl-thiazolinyl-carboxylic acid (HPTT-COOH), an advanced intermediate containing the aryl-4,2-bis-heterocyclic skeleton of the bithiazoline class of siderophores. In Pseudomonas aeruginosa (strain ATCC 15692 / DSM 22644 / CIP 104116 / JCM 14847 / LMG 12228 / 1C / PRS 101 / PAO1), this protein is Pyochelin synthetase PchF.